The chain runs to 322 residues: 3-alpha-hydroxysteroid dehydrogenase (322 aa).

Position 1 is a blocked amino end (Met) (Met1). Residues 20–24 (GFGTT) and Asp50 contribute to the NADP(+) site. Tyr55 serves as the catalytic Proton donor. His117 is a binding site for substrate. Residues 166 to 167 (SN), Gln190, and 216 to 221 (YCTLGS) each bind NADP(+). Trp227 lines the substrate pocket. 270–280 (RSFNAKRIKEL) contacts NADP(+).

The protein belongs to the aldo/keto reductase family. As to quaternary structure, monomer. In terms of tissue distribution, in brain, highest levels found in olfactory bulb. Moderate levels present in cerebellum, cerebral cortex, hypothalamus and pituitary. Low levels present in amygdala, brain stem, caudate putamen, cingulate cortex, hippocampus, midbrain, and thalamus.

It localises to the cytoplasm. It carries out the reaction a 3alpha-hydroxysteroid + NADP(+) = a 3-oxosteroid + NADPH + H(+). The enzyme catalyses a 3alpha-hydroxysteroid + NAD(+) = a 3-oxosteroid + NADH + H(+). Potently inhibited by the nonsteroidal anti-inflammatory drugs (NSAID). Besides being a 3-alpha-hydroxysteroid dehydrogenase, the enzyme can accomplish diverse functions: as quinone reductase, as an aromatic alcohol dehydrogenase, as dihydrodiol dehydrogenase, and as 9-, 11-, and 15-hydroxyprostaglandin dehydrogenase. The protein is 3-alpha-hydroxysteroid dehydrogenase (Akr1c9) of Rattus norvegicus (Rat).